A 544-amino-acid chain; its full sequence is MAAKEVKFGRDARERLLRGVDILADAVKVTLGPKGRNVVIDKSFGAPRITKDGVSVAKEIELENKFENMGAQMLREVASKTNDIAGDGTTTATVLGQAIVQEGVKAVAASMNPMDLKRGIDAAVEAVVADLFKKAKKIQTSEEIAQVATISANGAEDIGKMIADAMEKVGNEGVITVEEAKTAETELEVVEGMQFDRGYLSPYFVTNSEKMMVDLDDPYILIHEKKLSNLQSLLPVLEAVVQSGKPLLIIAEDVEGEALATLVVNKLRGGLKIAAVKAPGFGDRRKAMLEDIAVLTSGQVISEDVGIKLENVTLEMLGRAKKVHVSKETTTIVDGAGQKSEINARVSQIKAQIEETTSDYDREKLQERLAKLAGGVAVIRVGGSTEVEVKEKKDRVDDALNATRAAVEEGIVPGGGTALLRAAKALSIKGKNPDQEAGIGIIRRALQAPARQIAHNAGEEAAVIVGKVLENCSDTFGYNTATAQFGDLISFGIVDPVKVVRSALQNAASIASLLITTEAMVAEVPKKEAAAPAMPGGGMGGMDF.

Residues Thr30–Pro33, Lys51, Asp87–Thr91, Gly415, and Asp495 each bind ATP.

Belongs to the chaperonin (HSP60) family. As to quaternary structure, forms a cylinder of 14 subunits composed of two heptameric rings stacked back-to-back. Interacts with the co-chaperonin GroES.

The protein resides in the cytoplasm. The enzyme catalyses ATP + H2O + a folded polypeptide = ADP + phosphate + an unfolded polypeptide.. Its function is as follows. Together with its co-chaperonin GroES, plays an essential role in assisting protein folding. The GroEL-GroES system forms a nano-cage that allows encapsulation of the non-native substrate proteins and provides a physical environment optimized to promote and accelerate protein folding. In Bartonella bacilliformis (strain ATCC 35685 / KC583 / Herrer 020/F12,63), this protein is Chaperonin GroEL.